The primary structure comprises 270 residues: 3-methyl-2-oxobutanoate hydroxymethyltransferase (270 aa).

Positions 43 and 82 each coordinate Mg(2+). 3-methyl-2-oxobutanoate is bound by residues 43–44 (DS), Asp-82, and Lys-110. Mg(2+) is bound at residue Glu-112. Catalysis depends on Glu-179, which acts as the Proton acceptor.

This sequence belongs to the PanB family. In terms of assembly, homodecamer; pentamer of dimers. Requires Mg(2+) as cofactor.

The protein resides in the cytoplasm. The catalysed reaction is 3-methyl-2-oxobutanoate + (6R)-5,10-methylene-5,6,7,8-tetrahydrofolate + H2O = 2-dehydropantoate + (6S)-5,6,7,8-tetrahydrofolate. The protein operates within cofactor biosynthesis; (R)-pantothenate biosynthesis; (R)-pantoate from 3-methyl-2-oxobutanoate: step 1/2. Its function is as follows. Catalyzes the reversible reaction in which hydroxymethyl group from 5,10-methylenetetrahydrofolate is transferred onto alpha-ketoisovalerate to form ketopantoate. This Psychrobacter sp. (strain PRwf-1) protein is 3-methyl-2-oxobutanoate hydroxymethyltransferase.